We begin with the raw amino-acid sequence, 104 residues long: Large ribosomal subunit protein bL21 (104 aa).

The protein belongs to the bacterial ribosomal protein bL21 family. In terms of assembly, part of the 50S ribosomal subunit. Contacts protein L20.

Functionally, this protein binds to 23S rRNA in the presence of protein L20. The polypeptide is Large ribosomal subunit protein bL21 (Nitrosococcus oceani (strain ATCC 19707 / BCRC 17464 / JCM 30415 / NCIMB 11848 / C-107)).